Reading from the N-terminus, the 311-residue chain is Non-homologous end joining protein Ku (311 aa).

In terms of domain architecture, Ku spans 26 to 210; that stretch reads ISFGLVNIPI…NVNDKELQTA (185 aa). The disordered stretch occupies residues 269 to 311; the sequence is ASIDRTRRPNRETPAAAPAQAAEPKGAGDKKQKTTRKKASGTS. The span at 282 to 293 shows a compositional bias: low complexity; sequence PAAAPAQAAEPK. Residues 301 to 311 show a composition bias toward basic residues; it reads KTTRKKASGTS.

The protein belongs to the prokaryotic Ku family. As to quaternary structure, homodimer. Interacts with LigD.

The protein localises to the spore core. Functionally, with LigD forms a non-homologous end joining (NHEJ) DNA repair enzyme, which repairs dsDNA breaks with reduced fidelity. Binds linear dsDNA with 5'- and 3'- overhangs but not closed circular dsDNA nor ssDNA. Recruits and stimulates the ligase activity of LigD. Probably involved in DNA repair during spore germination. This chain is Non-homologous end joining protein Ku, found in Bacillus subtilis (strain 168).